A 165-amino-acid polypeptide reads, in one-letter code: Growth arrest and DNA damage-inducible protein GADD45 alpha (165 aa).

Threonine 2 bears the Phosphothreonine mark.

The protein belongs to the GADD45 family. In terms of assembly, interacts with AURKA, GADD45GIP1 and PCNA. Interacts with MAPK14.

The protein resides in the nucleus. In terms of biological role, might affect PCNA interaction with some CDK (cell division protein kinase) complexes; stimulates DNA excision repair in vitro and inhibits entry of cells into S phase. In T-cells, functions as a regulator of p38 MAPKs by inhibiting p88 phosphorylation and activity. The chain is Growth arrest and DNA damage-inducible protein GADD45 alpha (Gadd45a) from Mus musculus (Mouse).